The primary structure comprises 95 residues: MSVDISTVKRVAHLARIAVSEEDAERMTGELNAILGFVEQLNEVDVEGIEPMTSVTPMKMRMREDKVTDGGIAAAVVANAPVTEDNFFVVPKVVE.

The protein belongs to the GatC family. In terms of assembly, heterotrimer of A, B and C subunits.

The catalysed reaction is L-glutamyl-tRNA(Gln) + L-glutamine + ATP + H2O = L-glutaminyl-tRNA(Gln) + L-glutamate + ADP + phosphate + H(+). It catalyses the reaction L-aspartyl-tRNA(Asn) + L-glutamine + ATP + H2O = L-asparaginyl-tRNA(Asn) + L-glutamate + ADP + phosphate + 2 H(+). Allows the formation of correctly charged Asn-tRNA(Asn) or Gln-tRNA(Gln) through the transamidation of misacylated Asp-tRNA(Asn) or Glu-tRNA(Gln) in organisms which lack either or both of asparaginyl-tRNA or glutaminyl-tRNA synthetases. The reaction takes place in the presence of glutamine and ATP through an activated phospho-Asp-tRNA(Asn) or phospho-Glu-tRNA(Gln). This chain is Aspartyl/glutamyl-tRNA(Asn/Gln) amidotransferase subunit C, found in Brucella melitensis biotype 2 (strain ATCC 23457).